Consider the following 568-residue polypeptide: Methyl-accepting chemotaxis protein CtpH (568 aa).

The Cytoplasmic segment spans residues 1 to 39 (MPASPGHRDVLGCLVAACVPVQPGNPSRRSMLQQSLRAQ). The helical transmembrane segment at 40-60 (ILVLLGGSLAALLLIALACFG) threads the bilayer. Over 61–216 (SLTGDVRAYR…ISAEARRTML (156 aa)) the chain is Periplasmic. A helical membrane pass occupies residues 217 to 237 (LGSLVLIGASLAVALLSLWLV). Over 238–568 (NRNLVRPVQR…LGDALQRLRA (331 aa)) the chain is Cytoplasmic. Residues 239–291 (RNLVRPVQRLIEHIAQLSHGDFGERIEIRRKDELGKLALAANTLRDFLVDIFD) form the HAMP domain. The 237-residue stretch at 296 to 532 (STRDLDSASG…EISRNLTEIA (237 aa)) folds into the Methyl-accepting transducer domain.

It belongs to the methyl-accepting chemotaxis (MCP) protein family.

The protein resides in the cell inner membrane. In terms of biological role, chemotactic-signal transducers respond to changes in the concentration of attractants and repellents in the environment, transduce a signal from the outside to the inside of the cell, and facilitate sensory adaptation through the variation of the level of methylation. Chemoreceptor for inorganic phosphate, which is required for taxis at high concentrations of phosphate. Recognizes inorganic phosphate directly. Can also bind to other components that have a pyrophosphate group, including ATP and ADP. The sequence is that of Methyl-accepting chemotaxis protein CtpH from Pseudomonas aeruginosa (strain ATCC 15692 / DSM 22644 / CIP 104116 / JCM 14847 / LMG 12228 / 1C / PRS 101 / PAO1).